Here is an 887-residue protein sequence, read N- to C-terminus: CWF19-like protein 2 (887 aa).

The tract at residues 1–143 (MEAFSVRFES…DKRTEEECDS (143 aa)) is disordered. Residues 11-103 (ASSIEERKEQ…KKQKCQKQSE (93 aa)) adopt a coiled-coil conformation. Basic and acidic residues predominate over residues 14-72 (IEERKEQTRNARAEVLRQAKHNFEKEQRGEERKRLRDEDTWMLPDVHERIEQFSQEHSE). Serine 71 is modified (phosphoserine). Residues 73–98 (KKKKKKDKHSKKVKKEKKKKRKKQKC) are compositionally biased toward basic residues. Residues 99 to 110 (QKQSESTDSSAS) are compositionally biased toward low complexity. Residues 124–143 (SDKEKTWKVKDKRTEEECDS) show a composition bias toward basic and acidic residues. Residues 164–254 (SSSLKAEKET…RNFEDIVAEK (91 aa)) are a coiled coil. Lysine 168 participates in a covalent cross-link: Glycyl lysine isopeptide (Lys-Gly) (interchain with G-Cter in SUMO2). 2 disordered regions span residues 315 to 370 (LEME…DEDE) and 405 to 447 (SEES…GRRE). A compositionally biased stretch (basic and acidic residues) spans 342 to 352 (CRRESALRKNQ). A phosphoserine mark is found at serine 354 and serine 366. Basic and acidic residues predominate over residues 414 to 430 (RSDRRQENRKPSDKKPL). Residues 433-442 (WSYNANQHST) show a composition bias toward polar residues. Serine 478 is subject to Phosphoserine. Residues 495-524 (IKAEMMGNMELAEQLKAQLKEANKFKETQM) adopt a coiled-coil conformation. Residue lysine 597 forms a Glycyl lysine isopeptide (Lys-Gly) (interchain with G-Cter in SUMO2) linkage. Serine 622 is subject to Phosphoserine.

This sequence belongs to the CWF19 family.

In Mus musculus (Mouse), this protein is CWF19-like protein 2 (Cwf19l2).